A 243-amino-acid chain; its full sequence is MGRRILGQRRGRGTSTFRAPSHRYKADLSHRNVEESDLVTGEVVDIEHDPARSAPLADVQFDDGDRRLVLAPEGVTVGDEIQIGVSAEIAPGNTMPLAEIPEGVPVCNVERQPGDGGKFARASGVSATLLTHDRNAAVVQLPSGEMRRLSPECRATIGVVAGGGRTEKPFVKAGNKHHKMKSRGGKWPRVRGVAMNAVDHPFGGGGRQHPGKPKSVSRDTPPGRKVGDIASKRTGRGGKGGQE.

Residues 198–243 (VDHPFGGGGRQHPGKPKSVSRDTPPGRKVGDIASKRTGRGGKGGQE) are disordered. A compositionally biased stretch (basic and acidic residues) spans 221–231 (PPGRKVGDIAS).

Belongs to the universal ribosomal protein uL2 family. Part of the 50S ribosomal subunit. Forms a bridge to the 30S subunit in the 70S ribosome.

Its function is as follows. One of the primary rRNA binding proteins. Required for association of the 30S and 50S subunits to form the 70S ribosome, for tRNA binding and peptide bond formation. It has been suggested to have peptidyltransferase activity; this is somewhat controversial. Makes several contacts with the 16S rRNA in the 70S ribosome. In Natronomonas pharaonis (strain ATCC 35678 / DSM 2160 / CIP 103997 / JCM 8858 / NBRC 14720 / NCIMB 2260 / Gabara) (Halobacterium pharaonis), this protein is Large ribosomal subunit protein uL2.